We begin with the raw amino-acid sequence, 753 residues long: Ion-translocating oxidoreductase complex subunit C (753 aa).

4Fe-4S ferredoxin-type domains follow at residues 367 to 397 (EMGE…QQLY) and 407 to 436 (KATA…VQYF). [4Fe-4S] cluster-binding residues include Cys-377, Cys-380, Cys-383, Cys-387, Cys-416, Cys-419, Cys-422, and Cys-426. Disordered stretches follow at residues 517 to 561 (AKPD…RKAA), 606 to 625 (RKAE…PVDP), 640 to 659 (RKAE…PVDP), and 705 to 735 (AKAR…AVAA). The span at 526–537 (AAREARKAEARA) shows a compositional bias: basic and acidic residues. Low complexity-rich tracts occupy residues 610–622 (QQVA…VAEP), 644–656 (QQVA…VAEP), and 712–735 (QQAA…AVAA).

The protein belongs to the 4Fe4S bacterial-type ferredoxin family. RnfC subfamily. As to quaternary structure, the complex is composed of six subunits: RnfA, RnfB, RnfC, RnfD, RnfE and RnfG. It depends on [4Fe-4S] cluster as a cofactor.

Its subcellular location is the cell inner membrane. Part of a membrane-bound complex that couples electron transfer with translocation of ions across the membrane. The chain is Ion-translocating oxidoreductase complex subunit C from Klebsiella pneumoniae (strain 342).